A 417-amino-acid polypeptide reads, in one-letter code: Serine hydroxymethyltransferase (417 aa).

(6S)-5,6,7,8-tetrahydrofolate-binding positions include Leu-121 and 125-127; that span reads GHL. Lys-229 carries the N6-(pyridoxal phosphate)lysine modification. 355-357 is a (6S)-5,6,7,8-tetrahydrofolate binding site; sequence SPF.

It belongs to the SHMT family. In terms of assembly, homodimer. Pyridoxal 5'-phosphate serves as cofactor.

The protein resides in the cytoplasm. The catalysed reaction is (6R)-5,10-methylene-5,6,7,8-tetrahydrofolate + glycine + H2O = (6S)-5,6,7,8-tetrahydrofolate + L-serine. It functions in the pathway one-carbon metabolism; tetrahydrofolate interconversion. Its pathway is amino-acid biosynthesis; glycine biosynthesis; glycine from L-serine: step 1/1. In terms of biological role, catalyzes the reversible interconversion of serine and glycine with tetrahydrofolate (THF) serving as the one-carbon carrier. This reaction serves as the major source of one-carbon groups required for the biosynthesis of purines, thymidylate, methionine, and other important biomolecules. Also exhibits THF-independent aldolase activity toward beta-hydroxyamino acids, producing glycine and aldehydes, via a retro-aldol mechanism. This chain is Serine hydroxymethyltransferase, found in Salmonella schwarzengrund (strain CVM19633).